The sequence spans 1076 residues: Enhancer of mRNA-decapping protein 4-like protein pdc1 (1076 aa).

2 stretches are compositionally biased toward low complexity: residues 1 to 19 (MNEQ…LPNL) and 53 to 69 (SSLL…SNQS). Disordered regions lie at residues 1 to 82 (MNEQ…ASHS), 95 to 127 (GAKP…FNPV), and 139 to 204 (STGP…AEEQ). Polar residues predominate over residues 70-82 (PSNSGPKYYASHS). Polar residues predominate over residues 153–173 (NDSQDTAFQSSRNMPSDTSVA). Low complexity predominate over residues 174–184 (SPDYSHSQSSS). Polar residues predominate over residues 185 to 195 (PIANYQESGNS). 2 WD repeats span residues 292–334 (NSPN…STSE) and 402–441 (DTGI…PSTP). 2 disordered regions span residues 666-714 (RHST…SPSS) and 892-934 (TAPD…PAQG). Over residues 669–688 (TASPSTVNSGFSTPRSQATG) the composition is skewed to polar residues. Phosphoserine occurs at positions 671 and 673. Thr-674 carries the phosphothreonine modification. Basic and acidic residues predominate over residues 695 to 706 (DKGERFETKDKS). An interaction with dcp2 region spans residues 789 to 1076 (MQVALKEEIA…ISEISVASSN (288 aa)). Ser-1075 is modified (phosphoserine).

It belongs to the WD repeat EDC4 family. In terms of assembly, interacts with dcp2; via C-terminus.

The protein localises to the cytoplasm. It localises to the P-body. In terms of biological role, involved in P-body formation. Acts as a functional homolog of human EDC4, which plays a role in mRNA decapping in the process of mRNA degradation. Enhances the decapping activity of dcp2. Together with edc3, acts as a scaffolding protein sufficient for the phase transition of the components of the 5' to 3' mRNA degradation machinery to form P-bodies. Intermolecular interactions between the edc3 Sm domain and at least 10 helical leucine-rich motifs in dcp2 and pdc1 build the core of the interaction network of this spontaneous clustering process. The polypeptide is Enhancer of mRNA-decapping protein 4-like protein pdc1 (Schizosaccharomyces pombe (strain 972 / ATCC 24843) (Fission yeast)).